Reading from the N-terminus, the 219-residue chain is MNQDELKTLVGRAALEYVPEGSIVGVGTGSTVNCFIDALAGIKERIAGAVSSSVKSTERLREKGIRVFEAAAVESLPVYIDGADEIDPHGCMIKGGGAALTREKIVADLAERFVCIADASKLVDVLGRFPLPVEVLPMAVSQIQRRFAKLGATATVREGVITDNGQLILDVQGLRIGDPLAFETEVNQWPGVVTVGVFARHKASVCLLGTPEGVKTLRF.

Residues 28-31, 81-84, and 94-97 contribute to the substrate site; these read TGST, DGAD, and KGGG. E103 functions as the Proton acceptor in the catalytic mechanism. K121 is a substrate binding site.

It belongs to the ribose 5-phosphate isomerase family. In terms of assembly, homodimer.

It carries out the reaction aldehydo-D-ribose 5-phosphate = D-ribulose 5-phosphate. The protein operates within carbohydrate degradation; pentose phosphate pathway; D-ribose 5-phosphate from D-ribulose 5-phosphate (non-oxidative stage): step 1/1. Catalyzes the reversible conversion of ribose-5-phosphate to ribulose 5-phosphate. This is Ribose-5-phosphate isomerase A from Methylibium petroleiphilum (strain ATCC BAA-1232 / LMG 22953 / PM1).